We begin with the raw amino-acid sequence, 635 residues long: Threonine--tRNA ligase (635 aa).

The TGS domain occupies 1 to 61; that stretch reads MVSIRLPDGS…DRDASLAIVT (61 aa). Positions 242 to 533 are catalytic; that stretch reads DHRKLGKQLD…LIEHHAGAMP (292 aa). Zn(2+)-binding residues include Cys-333, His-384, and His-510.

It belongs to the class-II aminoacyl-tRNA synthetase family. As to quaternary structure, homodimer. Zn(2+) is required as a cofactor.

The protein localises to the cytoplasm. It catalyses the reaction tRNA(Thr) + L-threonine + ATP = L-threonyl-tRNA(Thr) + AMP + diphosphate + H(+). Functionally, catalyzes the attachment of threonine to tRNA(Thr) in a two-step reaction: L-threonine is first activated by ATP to form Thr-AMP and then transferred to the acceptor end of tRNA(Thr). Also edits incorrectly charged L-seryl-tRNA(Thr). In Burkholderia cenocepacia (strain ATCC BAA-245 / DSM 16553 / LMG 16656 / NCTC 13227 / J2315 / CF5610) (Burkholderia cepacia (strain J2315)), this protein is Threonine--tRNA ligase.